A 23-amino-acid chain; its full sequence is Coenzyme PQQ synthesis protein A (23 aa).

Positions 15–19 (EVTLY) form a cross-link, pyrroloquinoline quinone (Glu-Tyr).

It belongs to the PqqA family.

It participates in cofactor biosynthesis; pyrroloquinoline quinone biosynthesis. In terms of biological role, required for coenzyme pyrroloquinoline quinone (PQQ) biosynthesis. PQQ is probably formed by cross-linking a specific glutamate to a specific tyrosine residue and excising these residues from the peptide. The protein is Coenzyme PQQ synthesis protein A of Colwellia psychrerythraea (strain 34H / ATCC BAA-681) (Vibrio psychroerythus).